The following is a 346-amino-acid chain: tRNA N6-adenosine threonylcarbamoyltransferase (346 aa).

Positions 111 and 115 each coordinate Fe cation. Substrate is bound by residues 134–138 (LVSGG), Asp167, Gly180, and Asn277. Asp305 contacts Fe cation.

It belongs to the KAE1 / TsaD family. Fe(2+) serves as cofactor.

Its subcellular location is the cytoplasm. It carries out the reaction L-threonylcarbamoyladenylate + adenosine(37) in tRNA = N(6)-L-threonylcarbamoyladenosine(37) in tRNA + AMP + H(+). Required for the formation of a threonylcarbamoyl group on adenosine at position 37 (t(6)A37) in tRNAs that read codons beginning with adenine. Is involved in the transfer of the threonylcarbamoyl moiety of threonylcarbamoyl-AMP (TC-AMP) to the N6 group of A37, together with TsaE and TsaB. TsaD likely plays a direct catalytic role in this reaction. This chain is tRNA N6-adenosine threonylcarbamoyltransferase, found in Bordetella pertussis (strain Tohama I / ATCC BAA-589 / NCTC 13251).